The primary structure comprises 367 residues: MADIASKEVPLHSVQVEALVVMKIVKACAATYPTTATGSIVGMDSNGTLQITNSFPFPTTDVATSDSHPNDHMAASNIAAAAPRSKANVIYQSEMIKMLKEVNVDANNVGWYTSANMGNFINTSLIENQFFYQKEPNERTVALVHDVSRSAQGALSLRAFRLSPTFMAAYKESKFTTENMQKSKLTYKDILVELPIIVHNSHLLTSFLHQMPVELPKKDLDFPASFADLNRNTPPTPLYPNMESLDLSIDPYLERTCDMLLDSIETHYTELNNFQYFQRQLTREQAKVTAWKAKRTAENATRATQKLAPLPEDEWERLFKLPTEPSRLEGMLNARQVEQYSRQVDGFTASITGKMFAVKSNLLPEQN.

Residues 14–166 (VQVEALVVMK…LRAFRLSPTF (153 aa)) form the MPN domain.

The protein belongs to the eIF-3 subunit H family. Component of the eukaryotic translation initiation factor 3 (eIF-3) complex.

The protein localises to the cytoplasm. Component of the eukaryotic translation initiation factor 3 (eIF-3) complex, which is involved in protein synthesis of a specialized repertoire of mRNAs and, together with other initiation factors, stimulates binding of mRNA and methionyl-tRNAi to the 40S ribosome. The eIF-3 complex specifically targets and initiates translation of a subset of mRNAs involved in cell proliferation. In Botryotinia fuckeliana (strain B05.10) (Noble rot fungus), this protein is Eukaryotic translation initiation factor 3 subunit H.